The chain runs to 442 residues: Probable alpha-galactosidase B (442 aa).

The first 19 residues, 1–19, serve as a signal peptide directing secretion; it reads MQRYISLSVSLSLLSGANA. 2 disulfides stabilise this stretch: C42–C74 and C124–C154. D152 acts as the Nucleophile in catalysis. N-linked (GlcNAc...) asparagine glycans are attached at residues N159, N173, N179, and N215. Substrate is bound at residue 224-228; the sequence is EWGQA. Residue N235 is glycosylated (N-linked (GlcNAc...) asparagine). The active-site Proton donor is D246. A glycan (N-linked (GlcNAc...) asparagine) is linked at N285.

Belongs to the glycosyl hydrolase 27 family.

The protein resides in the secreted. The enzyme catalyses Hydrolysis of terminal, non-reducing alpha-D-galactose residues in alpha-D-galactosides, including galactose oligosaccharides, galactomannans and galactolipids.. Hydrolyzes a variety of simple alpha-D-galactoside as well as more complex molecules such as oligosaccharides and polysaccharides. This chain is Probable alpha-galactosidase B (aglB), found in Aspergillus oryzae (strain ATCC 42149 / RIB 40) (Yellow koji mold).